The sequence spans 365 residues: 1-aminocyclopropane-1-carboxylate oxidase homolog 1 (365 aa).

Positions 212–313 (CTNSLLLLGH…RISVACFFSS (102 aa)) constitute a Fe2OG dioxygenase domain. Residues H238, D240, and H294 each coordinate Fe cation.

Belongs to the iron/ascorbate-dependent oxidoreductase family. Requires Fe cation as cofactor.

The chain is 1-aminocyclopropane-1-carboxylate oxidase homolog 1 from Arabidopsis thaliana (Mouse-ear cress).